The chain runs to 25 residues: Omega-conotoxin MVIIB (25 aa).

Intrachain disulfides connect Cys1/Cys16, Cys8/Cys20, and Cys15/Cys25. At Cys25 the chain carries Cysteine amide.

The protein belongs to the conotoxin O1 superfamily. Expressed by the venom duct.

It is found in the secreted. In terms of biological role, omega-conotoxins act at presynaptic membranes, they bind and block voltage-gated calcium channels (Cav). The protein is Omega-conotoxin MVIIB of Conus magus (Magical cone).